Reading from the N-terminus, the 36-residue chain is Protein YnfP (36 aa).

This chain is Protein YnfP, found in Escherichia coli (strain K12).